Reading from the N-terminus, the 398-residue chain is Cysteine desulfurase 2 (398 aa).

Pyridoxal 5'-phosphate-binding positions include 71 to 72 (GT), Asn-150, Gln-178, and 198 to 200 (SGH). Lys-201 carries the N6-(pyridoxal phosphate)lysine modification. Position 236 (Thr-236) interacts with pyridoxal 5'-phosphate. Catalysis depends on Cys-323, which acts as the Cysteine persulfide intermediate. A [2Fe-2S] cluster-binding site is contributed by Cys-323.

The protein belongs to the class-V pyridoxal-phosphate-dependent aminotransferase family. NifS/IscS subfamily. In terms of assembly, homodimer. The cofactor is pyridoxal 5'-phosphate.

The catalysed reaction is (sulfur carrier)-H + L-cysteine = (sulfur carrier)-SH + L-alanine. Functionally, catalyzes the removal of elemental sulfur atoms from cysteine to produce alanine. Seems to participate in the biosynthesis of the nitrogenase metalloclusters by providing the inorganic sulfur required for the Fe-S core formation. This chain is Cysteine desulfurase 2, found in Trichormus variabilis (strain ATCC 29413 / PCC 7937) (Anabaena variabilis).